The chain runs to 238 residues: Cysteine-rich venom protein 1 (238 aa).

The signal sequence occupies residues 1–19 (MIAFIVLLSLAAVLQQSSG). One can recognise an SCP domain in the interval 38 to 164 (VDKHNALRRS…STKYLYVCQY (127 aa)). Cystine bridges form between C75–C153, C92–C165, C148–C162, C184–C191, C187–C196, C200–C233, C209–C227, and C218–C231. Residues 200 to 233 (CEYEDTFSNCKALAKKTKCKTEWIKSKCPATCFC) enclose the ShKT domain.

Belongs to the CRISP family. As to expression, expressed by the venom gland.

Its subcellular location is the secreted. Functionally, blocks contraction of smooth muscle elicited by high potassium-induced depolarization, but does not block caffeine-stimulated contraction. May target voltage-gated calcium channels on smooth muscle. The polypeptide is Cysteine-rich venom protein 1 (Hydrophis hardwickii (Hardwick's spine-bellied seasnake)).